The following is a 2329-amino-acid chain: Pre-mRNA-splicing factor 8 homolog (2329 aa).

Positions 1–53 (MANYGGHPQTEPHAIPDSILEEKSRKWKQLQGKRYSEKKKFGMSDTQKEEMPP) are disordered. Basic and acidic residues predominate over residues 34 to 53 (RYSEKKKFGMSDTQKEEMPP). The interval 804–1295 (TTVHWLESRR…KIQTRIKIGL (492 aa)) is reverse transcriptase homology domain. The linker stretch occupies residues 1296–1570 (NSKMPSRFPP…TLKISLIQIF (275 aa)). The segment at 1506–1519 (MKFKKLTNAQRSGL) is important for branch point selection. Residues 1574-1745 (LWQKIHESVV…LRERIRKGLQ (172 aa)) are restriction endonuclease homology domain. The segment at 1760-2013 (NYGELFSNQI…ILGMEISAPS (254 aa)) is RNase H homology domain. Residues 2096-2227 (TYILPKNILK…LTAYKLTPSG (132 aa)) enclose the MPN domain.

As to quaternary structure, part of the U5 snRNP complex and of the U4/U6-U5 tri-snRNP complex.

Its subcellular location is the nucleus. Functions as a scaffold that mediates the ordered assembly of spliceosomal proteins and snRNAs. Required for the assembly of the U4/U6-U5 tri-snRNP complex. Functions as a scaffold that positions spliceosomal U2, U5 and U6 snRNAs at splice sites on pre-mRNA substrates, so that splicing can occur. Interacts with both the 5' and the 3' splice site. The chain is Pre-mRNA-splicing factor 8 homolog (prp-8) from Caenorhabditis elegans.